A 315-amino-acid chain; its full sequence is Aspartate carbamoyltransferase catalytic subunit (315 aa).

R65 and T66 together coordinate carbamoyl phosphate. K93 contacts L-aspartate. Carbamoyl phosphate-binding residues include R115, H145, and Q148. The L-aspartate site is built by R179 and R234. Residues G275 and P276 each coordinate carbamoyl phosphate.

The protein belongs to the aspartate/ornithine carbamoyltransferase superfamily. ATCase family. Heterododecamer (2C3:3R2) of six catalytic PyrB chains organized as two trimers (C3), and six regulatory PyrI chains organized as three dimers (R2).

It carries out the reaction carbamoyl phosphate + L-aspartate = N-carbamoyl-L-aspartate + phosphate + H(+). It functions in the pathway pyrimidine metabolism; UMP biosynthesis via de novo pathway; (S)-dihydroorotate from bicarbonate: step 2/3. Catalyzes the condensation of carbamoyl phosphate and aspartate to form carbamoyl aspartate and inorganic phosphate, the committed step in the de novo pyrimidine nucleotide biosynthesis pathway. The protein is Aspartate carbamoyltransferase catalytic subunit of Xanthomonas euvesicatoria pv. vesicatoria (strain 85-10) (Xanthomonas campestris pv. vesicatoria).